The sequence spans 284 residues: D-tagatose-1,6-bisphosphate aldolase subunit GatY (284 aa).

D82 (proton donor) is an active-site residue. Residues H83 and H180 each coordinate Zn(2+). Position 181 (G181) interacts with dihydroxyacetone phosphate. H208 lines the Zn(2+) pocket. Residues 209-211 and 230-233 contribute to the dihydroxyacetone phosphate site; these read GAS and NVAT.

The protein belongs to the class II fructose-bisphosphate aldolase family. TagBP aldolase GatY subfamily. As to quaternary structure, forms a complex with GatZ. The cofactor is Zn(2+).

The catalysed reaction is D-tagatofuranose 1,6-bisphosphate = D-glyceraldehyde 3-phosphate + dihydroxyacetone phosphate. It functions in the pathway carbohydrate metabolism; D-tagatose 6-phosphate degradation; D-glyceraldehyde 3-phosphate and glycerone phosphate from D-tagatose 6-phosphate: step 2/2. Its function is as follows. Catalytic subunit of the tagatose-1,6-bisphosphate aldolase GatYZ, which catalyzes the reversible aldol condensation of dihydroxyacetone phosphate (DHAP or glycerone-phosphate) with glyceraldehyde 3-phosphate (G3P) to produce tagatose 1,6-bisphosphate (TBP). Requires GatZ subunit for full activity and stability. Is involved in the catabolism of galactitol. The polypeptide is D-tagatose-1,6-bisphosphate aldolase subunit GatY (Shigella dysenteriae serotype 1 (strain Sd197)).